The primary structure comprises 401 residues: S-adenosylmethionine synthase (401 aa).

135–140 is a binding site for ATP; that stretch reads GHGSGD.

Belongs to the AdoMet synthase 2 family. Mg(2+) serves as cofactor.

The catalysed reaction is L-methionine + ATP + H2O = S-adenosyl-L-methionine + phosphate + diphosphate. It functions in the pathway amino-acid biosynthesis; S-adenosyl-L-methionine biosynthesis; S-adenosyl-L-methionine from L-methionine: step 1/1. In terms of biological role, catalyzes the formation of S-adenosylmethionine from methionine and ATP. This Methanobrevibacter smithii (strain ATCC 35061 / DSM 861 / OCM 144 / PS) protein is S-adenosylmethionine synthase.